Reading from the N-terminus, the 172-residue chain is Ribosome maturation factor RimM (172 aa).

The PRC barrel domain occupies Ala95–Leu168.

Belongs to the RimM family. In terms of assembly, binds ribosomal protein uS19.

The protein localises to the cytoplasm. Functionally, an accessory protein needed during the final step in the assembly of 30S ribosomal subunit, possibly for assembly of the head region. Essential for efficient processing of 16S rRNA. May be needed both before and after RbfA during the maturation of 16S rRNA. It has affinity for free ribosomal 30S subunits but not for 70S ribosomes. This is Ribosome maturation factor RimM from Streptococcus equi subsp. zooepidemicus (strain H70).